The primary structure comprises 392 residues: Integrin-linked kinase-associated serine/threonine phosphatase 2C (392 aa).

Met-1 is subject to N-acetylmethionine. A disordered region spans residues Met-1–Glu-91. Residues Ser-56–Val-70 are compositionally biased toward polar residues. A compositionally biased stretch (basic and acidic residues) spans Thr-72–Glu-91. In terms of domain architecture, PPM-type phosphatase spans Lys-108–Ile-390. Residues Asp-152 and Gly-153 each contribute to the Mn(2+) site. N6-acetyllysine is present on Lys-210. Residues Asp-326 and Asp-381 each coordinate Mn(2+).

This sequence belongs to the PP2C family. Interacts with ILK. Mg(2+) serves as cofactor. Requires Mn(2+) as cofactor.

It is found in the cytoplasm. It catalyses the reaction O-phospho-L-seryl-[protein] + H2O = L-seryl-[protein] + phosphate. The catalysed reaction is O-phospho-L-threonyl-[protein] + H2O = L-threonyl-[protein] + phosphate. In terms of biological role, protein phosphatase that may play a role in regulation of cell cycle progression via dephosphorylation of its substrates whose appropriate phosphorylation states might be crucial for cell proliferation. Selectively associates with integrin linked kinase (ILK), to modulate cell adhesion and growth factor signaling. Inhibits the ILK-GSK3B signaling axis and may play an important role in inhibiting oncogenic transformation. This chain is Integrin-linked kinase-associated serine/threonine phosphatase 2C (Ilkap), found in Mus musculus (Mouse).